The following is a 612-amino-acid chain: Cytoplasmic dynein 1 intermediate chain 2 (612 aa).

Basic and acidic residues-rich tracts occupy residues 1 to 13 and 20 to 43; these read MSDK…ELER and QIRE…KKEA. Disordered stretches follow at residues 1-117 and 129-188; these read MSDK…MAKI and TYTK…EEKQ. At serine 2 the chain carries N-acetylserine. Serine 51 carries the diphosphoserine modification. Residues serine 51 and serine 84 each carry the phosphoserine modification. The span at 82–91 shows a compositional bias: low complexity; the sequence is PSSKSVSTPS. A Phosphothreonine modification is found at threonine 89. 3 positions are modified to phosphoserine: serine 91, serine 95, and serine 98. Residues 164 to 188 are compositionally biased toward basic and acidic residues; it reads EKTLKKDEESDSKAPPHELTEEEKQ. WD repeat units lie at residues 251–300, 304–344, 353–394, 403–443, 448–493, 496–536, and 542–581; these read SKHR…TTPE, HCQS…RTPV, AHTH…HPQD, SKAV…AGIS, GHQG…PLYS, DNSD…EVPT, and EGNP…AVPR.

Belongs to the dynein intermediate chain family. In terms of assembly, homodimer. The cytoplasmic dynein 1 complex consists of two catalytic heavy chains (HCs) and a number of non-catalytic subunits presented by intermediate chains (ICs), light intermediate chains (LICs) and light chains (LCs); the composition seems to vary in respect to the IC, LIC and LC composition. The heavy chain homodimer serves as a scaffold for the probable homodimeric assembly of the respective non-catalytic subunits. The ICs and LICs bind directly to the HC dimer and the LCs assemble on the IC dimer. Interacts with DYNLT3. Interacts with DYNLT1. Interacts (dephosphorylated at Ser-84) with DCTN1. Interacts with BICD2. Interacts with SPEF2. Interacts with CFAP61. Post-translationally, the phosphorylation status of Ser-84 appears to be involved in dynactin-dependent target binding. Pyrophosphorylation by 5-diphosphoinositol pentakisphosphate (5-IP7) promotes interaction with DCTN1. Serine pyrophosphorylation is achieved by Mg(2+)-dependent, but enzyme independent transfer of a beta-phosphate from a inositol pyrophosphate to a pre-phosphorylated serine residue.

The protein localises to the cytoplasm. The protein resides in the cytoskeleton. In terms of biological role, acts as one of several non-catalytic accessory components of the cytoplasmic dynein 1 complex that are thought to be involved in linking dynein to cargos and to adapter proteins that regulate dynein function. Cytoplasmic dynein 1 acts as a motor for the intracellular retrograde motility of vesicles and organelles along microtubules. The intermediate chains mediate the binding of dynein to dynactin via its 150 kDa component (p150-glued) DCTN1. Involved in membrane-transport, such as Golgi apparatus, late endosomes and lysosomes. This chain is Cytoplasmic dynein 1 intermediate chain 2 (DYNC1I2), found in Bos taurus (Bovine).